The primary structure comprises 674 residues: MWHEARKHERKLRGMMVDYKKRAERRREYYEKIKKDPAQFLQVHGRACKVHLDSAVALAAESPVNMMPWQGDTNNMIDRFDVRAHLDHIPDYTPPLLTTISPEQESDERKCNYERYRGLVQNDFAGISEEQCLYQIYIDELYGGLQRPSEDEKKKLAEKKASIGYTYEDSTVAEVEKAAEKPEEEESAAEEESNSDEDEVIPDIDVEVDVDELNQEQVADLNKQATTYGMADGDFVRMLRKDKEEAEAIKHAKALEEEKAMYSGRRSRRQRREFREKRLRGRKISPPSYARRDSPTYDPYKRSPSESSSESRSRSRSPTPGREEKITFITSFGGSDEEAAAAAAAAAASGVTTGKPPAPPQPGGPAPGRNASARRRSSSSSSSSSASRTSSSRSSSRSSSRSRRGGGYYRSGRHARSRSRSWSRSRSRSRRYSRSRSRGRRHSGGGSRDGHRYSRSPARRGGYGPRRRSRSRSHSGDRYRRGGRGLRHHSSSRSRSSWSLSPSRSRSLTRSRSHSPSPSQSRSRSRSRSQSPSPSPAREKLTRPAASPAVGEKLKKTEPAAGKETGAAKPKLTPQEKLKLRMQKALNRQFKADKKAAQEKMIQQEHERQEREDELRAMARKIRMKERERREKEREEWERQYSRQSRSPSPRYSREYSSSRRRSRSRSRSPHYRH.

Serine 101 carries the post-translational modification Phosphoserine. Disordered stretches follow at residues 171–232 and 258–674; these read TVAE…GMAD and EKAM…HYRH. Residues 182–214 show a composition bias toward acidic residues; the sequence is PEEEESAAEEESNSDEDEVIPDIDVEVDVDELN. Positions 265 to 283 are enriched in basic residues; that stretch reads RRSRRQRREFREKRLRGRK. Phosphoserine is present on residues serine 285 and serine 294. Positions 290-313 are enriched in basic and acidic residues; the sequence is ARRDSPTYDPYKRSPSESSSESRS. At threonine 327 the chain carries Phosphothreonine. 2 positions are modified to phosphoserine: serine 331 and serine 335. A compositionally biased stretch (pro residues) spans 356-365; it reads PPAPPQPGGP. A compositionally biased stretch (low complexity) spans 378 to 399; the sequence is SSSSSSSSASRTSSSRSSSRSS. 2 stretches are compositionally biased toward basic residues: residues 411–443 and 481–492; these read SGRHARSRSRSWSRSRSRSRRYSRSRSRGRRHS and RGGRGLRHHSSS. 2 stretches are compositionally biased toward low complexity: residues 493–506 and 514–532; these read RSRSSWSLSPSRSR and HSPSPSQSRSRSRSRSQSP. A Phosphoserine modification is found at serine 547. Threonine 573 carries the post-translational modification Phosphothreonine. The stretch at 585 to 647 forms a coiled coil; sequence ALNRQFKADK…ERQYSRQSRS (63 aa). Composition is skewed to basic and acidic residues over residues 590 to 617 and 625 to 641; these read FKADKKAAQEKMIQQEHERQEREDELRA and KERERREKEREEWERQY. Over residues 642-651 the composition is skewed to low complexity; sequence SRQSRSPSPR. The segment covering 659-674 has biased composition (basic residues); that stretch reads SRRRSRSRSRSPHYRH.

This sequence belongs to the splicing factor SR family. Probably interacts with CLK4. Phosphorylated in vitro by CLK4.

The protein resides in the nucleus. In terms of biological role, probably functions as an alternative splicing regulator. May regulate the mRNA splicing of genes such as CLK1. May act by regulating members of the CLK kinase family. The protein is CLK4-associating serine/arginine rich protein (CLASRP) of Homo sapiens (Human).